Consider the following 689-residue polypeptide: Glycine--tRNA ligase beta subunit (689 aa).

Belongs to the class-II aminoacyl-tRNA synthetase family. As to quaternary structure, tetramer of two alpha and two beta subunits.

The protein resides in the cytoplasm. The enzyme catalyses tRNA(Gly) + glycine + ATP = glycyl-tRNA(Gly) + AMP + diphosphate. The chain is Glycine--tRNA ligase beta subunit from Edwardsiella ictaluri (strain 93-146).